A 500-amino-acid chain; its full sequence is Small ribosomal subunit protein uS3m (500 aa).

Belongs to the universal ribosomal protein uS3 family.

It is found in the mitochondrion. The protein is Small ribosomal subunit protein uS3m (RPS3) of Prototheca wickerhamii.